Here is a 787-residue protein sequence, read N- to C-terminus: MPPKTLFPLVPACDAAPRKKRLAVALLAVPGLVPAVSQAQLSGAAAEPQAFGSPWDLRLAPQLDEHPQKQGGKPATFVLADHTNGTAEQDLAAKGAAEIRRGNAAVKADAIHYDQDTDMADAYGKVTVANGGTTFSGPEAHLKVEANQGFMTTPKYRFTATGGTGSAERVQLLDSERSVFTNGTYTGCQCSTNPAWYIKGSEFDFDTGADEGVARNGVLFFQGVPLFGSPWLTFPLSGDRRSGFLPPTFSPFSSTNGFELSLPYYFNIAPNRDLTITPHIISKRGIFTQATFRYLSTNYSGTLTGEYLPDDRVAHRNRYAIFWQHQQNFGNGFGGYVYYNKVSDNLYPEELGSTNQFVNGVQTVYQQEAGLTYNNGPWSVLGRYQHWQTLPPSAAPYGREPQLNVKYTKYNVGGFDFGAEADYSRFRITTADQPEGDRVMFNPYVSYGLYGPGYFFVPKAQLHMASYDLTTTTGGVPGQPKRFTYSIPTLSLDTGLVFDRSVRLFGQDFIQTLEPRLFYVYTPYRNQSNAPLFDTAVSDFGLAEIFTPNTFVGNDRIADANRLTAALTTRFINPTTGDERARFVIAQQYYFTDQRVTLLPTEAPATARHSDLILGASVKLGAGFASETAFQYNVDNNQLVKSSVGFGYSPGERRVINVGYRYTRQNPTLSNEPINQILMSAQWPLTRRLYAVGRLNYDLASSRVVDGLVGFQYDADCWAFGVGVQRYANGLNSSGQQNSSTRVLAQLVLKGLTSIDNGLVTAFRAGVQGYTPLPPAPAPLSRFSNYD.

An N-terminal signal peptide occupies residues 1–39 (MPPKTLFPLVPACDAAPRKKRLAVALLAVPGLVPAVSQA).

This sequence belongs to the LptD family. Component of the lipopolysaccharide transport and assembly complex. Interacts with LptE and LptA.

Its subcellular location is the cell outer membrane. Functionally, together with LptE, is involved in the assembly of lipopolysaccharide (LPS) at the surface of the outer membrane. In Burkholderia pseudomallei (strain 1710b), this protein is LPS-assembly protein LptD.